The following is a 380-amino-acid chain: Cytochrome b (380 aa).

4 helical membrane passes run 34 to 54, 78 to 99, 114 to 134, and 179 to 199; these read FGSLLGICLMTQILTGLLLAM, WLIRNLHANGASLFFICIYLHI, WNTGIILLLTLMATAFVGYVL, and FFALHFLLPFLIAGLTLIHLT. His84 and His98 together coordinate heme b. 2 residues coordinate heme b: His183 and His197. Position 202 (His202) interacts with a ubiquinone. 4 helical membrane-spanning segments follow: residues 227-247, 289-309, 321-341, and 348-368; these read SKDILGFMLLYFLLTTLALLS, LGGVLALAASILILFLSPFLH, LSQALFWLLVTNLFILTWIGS, and FIIIGQLASLSYFTILLILLP.

The protein belongs to the cytochrome b family. As to quaternary structure, the cytochrome bc1 complex contains 11 subunits: 3 respiratory subunits (MT-CYB, CYC1 and UQCRFS1), 2 core proteins (UQCRC1 and UQCRC2) and 6 low-molecular weight proteins (UQCRH/QCR6, UQCRB/QCR7, UQCRQ/QCR8, UQCR10/QCR9, UQCR11/QCR10 and a cleavage product of UQCRFS1). This cytochrome bc1 complex then forms a dimer. The cofactor is heme b.

The protein resides in the mitochondrion inner membrane. Its function is as follows. Component of the ubiquinol-cytochrome c reductase complex (complex III or cytochrome b-c1 complex) that is part of the mitochondrial respiratory chain. The b-c1 complex mediates electron transfer from ubiquinol to cytochrome c. Contributes to the generation of a proton gradient across the mitochondrial membrane that is then used for ATP synthesis. The polypeptide is Cytochrome b (MT-CYB) (Phalcoboenus australis (Striated caracara)).